The sequence spans 434 residues: 3-phosphoshikimate 1-carboxyvinyltransferase (434 aa).

Residues Lys-22, Ser-23, and Arg-27 each coordinate 3-phosphoshikimate. Lys-22 contributes to the phosphoenolpyruvate binding site. 2 residues coordinate phosphoenolpyruvate: Gly-94 and Arg-122. 6 residues coordinate 3-phosphoshikimate: Ser-169, Ser-170, Gln-171, Ser-199, Asp-320, and Lys-347. Gln-171 lines the phosphoenolpyruvate pocket. Asp-320 serves as the catalytic Proton acceptor. Phosphoenolpyruvate-binding residues include Arg-351, Arg-395, and Lys-420.

Belongs to the EPSP synthase family. In terms of assembly, monomer.

It localises to the cytoplasm. The enzyme catalyses 3-phosphoshikimate + phosphoenolpyruvate = 5-O-(1-carboxyvinyl)-3-phosphoshikimate + phosphate. Its pathway is metabolic intermediate biosynthesis; chorismate biosynthesis; chorismate from D-erythrose 4-phosphate and phosphoenolpyruvate: step 6/7. Its function is as follows. Catalyzes the transfer of the enolpyruvyl moiety of phosphoenolpyruvate (PEP) to the 5-hydroxyl of shikimate-3-phosphate (S3P) to produce enolpyruvyl shikimate-3-phosphate and inorganic phosphate. The sequence is that of 3-phosphoshikimate 1-carboxyvinyltransferase from Ralstonia pickettii (strain 12J).